The following is a 142-amino-acid chain: Small ribosomal subunit protein uS12 (142 aa).

This sequence belongs to the universal ribosomal protein uS12 family. In terms of assembly, part of the 30S ribosomal subunit.

Its function is as follows. With S4 and S5 plays an important role in translational accuracy. Located at the interface of the 30S and 50S subunits. The protein is Small ribosomal subunit protein uS12 of Archaeoglobus fulgidus (strain ATCC 49558 / DSM 4304 / JCM 9628 / NBRC 100126 / VC-16).